The following is a 221-amino-acid chain: NAD(P)H-hydrate epimerase (221 aa).

Residues 9 to 219 (MRELETAAVK…NIGLPKELLS (211 aa)) enclose the YjeF N-terminal domain. Position 60–64 (60–64 (GNGGD)) interacts with (6S)-NADPHX. K(+) contacts are provided by asparagine 61 and aspartate 131. Residues 135–141 (GIGFKGE), tyrosine 146, and aspartate 164 contribute to the (6S)-NADPHX site. Serine 167 serves as a coordination point for K(+).

The protein belongs to the NnrE/AIBP family. Requires K(+) as cofactor.

The enzyme catalyses (6R)-NADHX = (6S)-NADHX. It carries out the reaction (6R)-NADPHX = (6S)-NADPHX. Functionally, catalyzes the epimerization of the S- and R-forms of NAD(P)HX, a damaged form of NAD(P)H that is a result of enzymatic or heat-dependent hydration. This is a prerequisite for the S-specific NAD(P)H-hydrate dehydratase to allow the repair of both epimers of NAD(P)HX. This chain is NAD(P)H-hydrate epimerase, found in Elusimicrobium minutum (strain Pei191).